The primary structure comprises 193 residues: dCTP deaminase (193 aa).

Residues 110 to 115 (RSSLAR), Asp-128, 136 to 138 (VLE), Tyr-171, Lys-178, and Gln-182 contribute to the dCTP site. The active-site Proton donor/acceptor is Glu-138. A disordered region spans residues 170-193 (PYNSRQDAKYRGQQGAVASRIDKD).

Belongs to the dCTP deaminase family. Homotrimer.

The catalysed reaction is dCTP + H2O + H(+) = dUTP + NH4(+). It functions in the pathway pyrimidine metabolism; dUMP biosynthesis; dUMP from dCTP (dUTP route): step 1/2. In terms of biological role, catalyzes the deamination of dCTP to dUTP. This Yersinia enterocolitica serotype O:8 / biotype 1B (strain NCTC 13174 / 8081) protein is dCTP deaminase.